The sequence spans 758 residues: Vitamin K-dependent gamma-carboxylase (758 aa).

The segment at 1–34 (MAVSARPARAPRGPDKVKKDKAAQTSGPRQGSQM) is disordered. Position 2 is an N-acetylalanine (A2). The Cytoplasmic portion of the chain corresponds to 2–60 (AVSARPARAPRGPDKVKKDKAAQTSGPRQGSQMGKLLGFEWTDVSSWERLVTLLNRPTD). Over residues 12 to 22 (RGPDKVKKDKA) the composition is skewed to basic and acidic residues. Residues 23–33 (AQTSGPRQGSQ) are compositionally biased toward polar residues. The chain crosses the membrane as a helical span at residues 61–81 (PASLAVFRFLFGLMMVLDIPQ). The Lumenal portion of the chain corresponds to 82–113 (ERGLSSLDRRYLDGLEVCRFPLLDALQPLPLD). C99 and C450 are disulfide-bonded. Residues 114–134 (WMYLVYTIMFLGALGMMLGLC) traverse the membrane as a helical segment. Residues 135 to 136 (YR) are Cytoplasmic-facing. The chain crosses the membrane as a helical span at residues 137–157 (ISCVLFLLPYWYVFLLDKTSW). The Lumenal portion of the chain corresponds to 158 to 292 (NNHSYLYGLL…VSYFHCMNSQ (135 aa)). Residues 293-313 (LFSIGMFPYVMLASSPLFCSP) traverse the membrane as a helical segment. Residues 314-361 (EWPRKLVAHCPKKLQELLPLRTAPQPSTSCMYKRSRARGSQKPGLRHQ) lie on the Cytoplasmic side of the membrane. The chain crosses the membrane as a helical span at residues 362-382 (LSTAFTLLYLLEQLFLPYSHF). Topologically, residues 383 to 758 (LTQGYNNWTN…PDSHPVHSEF (376 aa)) are lumenal. The disordered stretch occupies residues 726–758 (RPFEPAGEPSPVNTDSSNPNPPEPDSHPVHSEF). A compositionally biased stretch (basic and acidic residues) spans 749–758 (PDSHPVHSEF).

It belongs to the vitamin K-dependent gamma-carboxylase family. As to quaternary structure, monomer. May interact with CALU.

The protein localises to the endoplasmic reticulum membrane. It carries out the reaction 4-carboxy-L-glutamyl-[protein] + 2,3-epoxyphylloquinone + H2O + H(+) = phylloquinol + L-glutamyl-[protein] + CO2 + O2. Mediates the vitamin K-dependent carboxylation of glutamate residues to calcium-binding gamma-carboxyglutamate (Gla) residues with the concomitant conversion of the reduced hydroquinone form of vitamin K to vitamin K epoxide. Catalyzes gamma-carboxylation of various proteins, such as blood coagulation factors (F2, F7, F9 and F10), osteocalcin (BGLAP) or matrix Gla protein (MGP). The protein is Vitamin K-dependent gamma-carboxylase (GGCX) of Ovis aries (Sheep).